Here is a 294-residue protein sequence, read N- to C-terminus: Acetyl-coenzyme A carboxylase carboxyl transferase subunit beta (294 aa).

One can recognise a CoA carboxyltransferase N-terminal domain in the interval 29 to 294 (LWEKCPECGQ…TQVVKLQTNA (266 aa)). C33, C36, C52, and C55 together coordinate Zn(2+). The C4-type zinc-finger motif lies at 33–55 (CPECGQVVYRKDLIDNCSVCSNC).

It belongs to the AccD/PCCB family. Acetyl-CoA carboxylase is a heterohexamer composed of biotin carboxyl carrier protein (AccB), biotin carboxylase (AccC) and two subunits each of ACCase subunit alpha (AccA) and ACCase subunit beta (AccD). Zn(2+) serves as cofactor.

It localises to the cytoplasm. The enzyme catalyses N(6)-carboxybiotinyl-L-lysyl-[protein] + acetyl-CoA = N(6)-biotinyl-L-lysyl-[protein] + malonyl-CoA. It functions in the pathway lipid metabolism; malonyl-CoA biosynthesis; malonyl-CoA from acetyl-CoA: step 1/1. Functionally, component of the acetyl coenzyme A carboxylase (ACC) complex. Biotin carboxylase (BC) catalyzes the carboxylation of biotin on its carrier protein (BCCP) and then the CO(2) group is transferred by the transcarboxylase to acetyl-CoA to form malonyl-CoA. The polypeptide is Acetyl-coenzyme A carboxylase carboxyl transferase subunit beta (Prochlorococcus marinus (strain NATL2A)).